The chain runs to 315 residues: Acetyl-coenzyme A carboxylase carboxyl transferase subunit alpha (315 aa).

The CoA carboxyltransferase C-terminal domain maps to Lys35–Ile289.

This sequence belongs to the AccA family. In terms of assembly, acetyl-CoA carboxylase is a heterohexamer composed of biotin carboxyl carrier protein (AccB), biotin carboxylase (AccC) and two subunits each of ACCase subunit alpha (AccA) and ACCase subunit beta (AccD).

Its subcellular location is the cytoplasm. It catalyses the reaction N(6)-carboxybiotinyl-L-lysyl-[protein] + acetyl-CoA = N(6)-biotinyl-L-lysyl-[protein] + malonyl-CoA. It participates in lipid metabolism; malonyl-CoA biosynthesis; malonyl-CoA from acetyl-CoA: step 1/1. Functionally, component of the acetyl coenzyme A carboxylase (ACC) complex. First, biotin carboxylase catalyzes the carboxylation of biotin on its carrier protein (BCCP) and then the CO(2) group is transferred by the carboxyltransferase to acetyl-CoA to form malonyl-CoA. In Francisella tularensis subsp. mediasiatica (strain FSC147), this protein is Acetyl-coenzyme A carboxylase carboxyl transferase subunit alpha.